A 401-amino-acid chain; its full sequence is Elongation factor Tu 1 (401 aa).

In terms of domain architecture, tr-type G spans 10-209 (KPHVNVGTIG…AVDEYIPTPV (200 aa)). The tract at residues 19-26 (GHVDHGKT) is G1. Position 19–26 (19–26 (GHVDHGKT)) interacts with GTP. A Mg(2+)-binding site is contributed by threonine 26. Positions 60 to 64 (GITIA) are G2. Residues 81 to 84 (DCPG) form a G3 region. GTP contacts are provided by residues 81–85 (DCPGH) and 136–139 (NKVD). Residues 136 to 139 (NKVD) form a G4 region. The tract at residues 174–176 (SAL) is G5.

The protein belongs to the TRAFAC class translation factor GTPase superfamily. Classic translation factor GTPase family. EF-Tu/EF-1A subfamily. In terms of assembly, monomer.

The protein localises to the cytoplasm. It catalyses the reaction GTP + H2O = GDP + phosphate + H(+). Its function is as follows. GTP hydrolase that promotes the GTP-dependent binding of aminoacyl-tRNA to the A-site of ribosomes during protein biosynthesis. The polypeptide is Elongation factor Tu 1 (Roseiflexus sp. (strain RS-1)).